We begin with the raw amino-acid sequence, 180 residues long: MELSIQKIEALIRLSTIVMLVLTACLIGLDSQTKVIFYVQKKASFKDLRALVGLLYITSLAAAYNLLQLCCSSFSASYKGTSLQSYAYLAWLRYILDQAVVYAVFAGNLAALEHSFLVLTGEENFQWLKWCNKYTRFCTQIGGSLLCGFVASLLMFSIASISAFNLFRQYSPTKFMHLKL.

Over M1–K7 the chain is Cytoplasmic. A helical membrane pass occupies residues I8–G28. Topologically, residues L29–R49 are extracellular. The helical transmembrane segment at A50–C70 threads the bilayer. The Cytoplasmic portion of the chain corresponds to C71–Q98. The chain crosses the membrane as a helical span at residues A99–L119. Residues T120–Q140 are Extracellular-facing. A helical transmembrane segment spans residues I141–I161. Residues S162–L180 are Cytoplasmic-facing.

The protein belongs to the Casparian strip membrane proteins (CASP) family. In terms of assembly, homodimer and heterodimers.

It is found in the cell membrane. The protein is CASP-like protein XL3 (XL3) of Gossypium hirsutum (Upland cotton).